Consider the following 407-residue polypeptide: Putative cell wall shaping protein YabE (407 aa).

Residues 1–31 (MKKLFSVKLSKSKVILVAACLLLAGSGTAYA) form the signal peptide. Residues 206 to 286 (ITRIEKVTDV…DKVIAVGTKQ (81 aa)) form the G5 domain.

Its function is as follows. Suggested to be involved in cell wall modification. This is Putative cell wall shaping protein YabE (yabE) from Bacillus subtilis (strain 168).